The primary structure comprises 372 residues: Fatty acid 2-hydroxylase (372 aa).

Positions 8 to 86 (AASFTPAEVQ…LEQYYVGELR (79 aa)) constitute a Cytochrome b5 heme-binding domain. Positions 43 and 69 each coordinate heme. 2 consecutive transmembrane segments (helical) span residues 168–188 (VWYS…WSYY) and 213–233 (SVFI…EYVI). Residues 219 to 361 (FVLGMLFWTF…TKLWDYFFHT (143 aa)) form the Fatty acid hydroxylase domain. Zn(2+)-binding residues include His-234, His-239, His-257, His-260, and His-261. Helical transmembrane passes span 268–288 (SRLV…YVFL) and 290–310 (LILP…GYVL). His-315, His-319, His-336, His-339, and His-340 together coordinate Zn(2+).

Belongs to the sterol desaturase family. SCS7 subfamily. Zn(2+) is required as a cofactor. In terms of tissue distribution, expressed in brain (at protein level). Detected in cerebellum and forebrain. Expression in the white matter is mainly restricted in oligodendrocytes. Expressed in stomach, kidney, skin and testis. Expressed in sebaceous gland.

The protein resides in the endoplasmic reticulum membrane. It localises to the microsome membrane. The enzyme catalyses a 1,2-saturated fatty acid + 2 Fe(II)-[cytochrome b5] + O2 + 2 H(+) = a (R)-2-hydroxy fatty acid + 2 Fe(III)-[cytochrome b5] + H2O. It carries out the reaction hexadecanoate + 2 Fe(II)-[cytochrome b5] + O2 + 2 H(+) = (R)-2-hydroxyhexadecanoate + 2 Fe(III)-[cytochrome b5] + H2O. It catalyses the reaction octadecanoate + 2 Fe(II)-[cytochrome b5] + O2 + 2 H(+) = (R)-2-hydroxyoctadecanoate + 2 Fe(III)-[cytochrome b5] + H2O. The catalysed reaction is docosanoate + 2 Fe(II)-[cytochrome b5] + O2 + 2 H(+) = 2-hydroxydocosanoate + 2 Fe(III)-[cytochrome b5] + H2O. The enzyme catalyses tetracosanoate + 2 Fe(II)-[cytochrome b5] + O2 + 2 H(+) = (R)-2-hydroxytetracosanoate + 2 Fe(III)-[cytochrome b5] + H2O. Its pathway is sphingolipid metabolism; galactosylceramide biosynthesis. The protein operates within lipid metabolism; fatty acid metabolism. Catalyzes the hydroxylation of free fatty acids at the C-2 position to produce 2-hydroxy fatty acids, which are building blocks of sphingolipids and glycosphingolipids common in neural tissue and epidermis. FA2H is stereospecific for the production of (R)-2-hydroxy fatty acids. Plays an essential role in the synthesis of galactosphingolipids of the myelin sheath. Responsible for the synthesis of sphingolipids and glycosphingolipids involved in the formation of epidermal lamellar bodies critical for skin permeability barrier. Participates in the synthesis of glycosphingolipids and a fraction of type II wax diesters in sebaceous gland, specifically regulating hair follicle homeostasis. Involved in the synthesis of sphingolipids of plasma membrane rafts, controlling lipid raft mobility and trafficking of raft-associated proteins. This chain is Fatty acid 2-hydroxylase, found in Mus musculus (Mouse).